Reading from the N-terminus, the 240-residue chain is Tetraspanin-1 (240 aa).

Topologically, residues 1 to 9 (MQCFSFIKT) are cytoplasmic. A helical membrane pass occupies residues 10–30 (IMILFNLLIFLCGAALLAVGI). The Extracellular portion of the chain corresponds to 31 to 52 (WVSIDGASFLKIFGPLSSSAMQ). Residues 53-73 (FVNVGYFLIAAGAVVFALGFL) form a helical membrane-spanning segment. The Cytoplasmic portion of the chain corresponds to 74 to 88 (GCYGAQTESKCALMT). The helical transmembrane segment at 89–109 (FFFILLLIFIAEVAAAVVALV) threads the bilayer. Residues 110-210 (YTTMAEHFLT…QQLLYDIRTN (101 aa)) are Extracellular-facing. A glycan (N-linked (GlcNAc...) asparagine) is linked at Asn154. A helical membrane pass occupies residues 211-231 (AVTVGGVAAGIGGLELAAMIV). At 232–240 (SMYLYCNLQ) the chain is on the cytoplasmic side.

It belongs to the tetraspanin (TM4SF) family. In terms of assembly, interacts with SLC19A2. Interacts with NTRK1/TRKA.

The protein resides in the lysosome membrane. Functionally, structural component of specialized membrane microdomains known as tetraspanin-enriched microdomains (TERMs), which act as platforms for receptor clustering and signaling. Participates thereby in diverse biological functions such as cell signal transduction, adhesion, migration and protein trafficking. Regulates neuronal differentiation in response to NGF by facilitating NGF-mediated activation of NTRK1/TRKA receptor tyrosine kinase and subsequent downstream signaling pathways. Plays a role in the inhibition of TNFalpha-induced apoptosis. Mechanistically, inhibits the NF-kappa-B signaling pathway by blocking phosphorylation of CHUK. Also promotes the stability of the thiamine transporter 1/SLC19A2 in intestinal epithelial cells leading to an increase of thiamine uptake process. The polypeptide is Tetraspanin-1 (TSPAN1) (Macaca fascicularis (Crab-eating macaque)).